Consider the following 179-residue polypeptide: Molybdopterin synthase catalytic subunit (179 aa).

Positions 1–10 are enriched in polar residues; the sequence is MTTSEDQTTP. Residues 1 to 21 are disordered; sequence MTTSEDQTTPAHLDPKTYPRH. Substrate contacts are provided by residues 127 to 128, lysine 143, and 150 to 152; these read HR and KRE.

Belongs to the MoaE family. MOCS2B subfamily. As to quaternary structure, heterotetramer; composed of 2 small (MOCS2A) and 2 large (MOCS2B) subunits.

Its subcellular location is the cytoplasm. It catalyses the reaction 2 [molybdopterin-synthase sulfur-carrier protein]-C-terminal-Gly-aminoethanethioate + cyclic pyranopterin phosphate + H2O = molybdopterin + 2 [molybdopterin-synthase sulfur-carrier protein]-C-terminal Gly-Gly + 2 H(+). It participates in cofactor biosynthesis; molybdopterin biosynthesis. Functionally, catalytic subunit of the molybdopterin synthase complex, a complex that catalyzes the conversion of precursor Z into molybdopterin. Acts by mediating the incorporation of 2 sulfur atoms from thiocarboxylated MOCS2A into precursor Z to generate a dithiolene group. The protein is Molybdopterin synthase catalytic subunit of Aspergillus oryzae (strain ATCC 42149 / RIB 40) (Yellow koji mold).